Consider the following 218-residue polypeptide: Capsid protein (218 aa).

Position 1 is an N-acetylmethionine; by host (Met1). Low complexity predominate over residues 1–10 (MDKSESTSAG). Positions 1–30 (MDKSESTSAGRNRRRRPRRGSRSASSSADA) are disordered. Over residues 11 to 21 (RNRRRRPRRGS) the composition is skewed to basic residues.

It belongs to the cucumovirus capsid protein family.

It localises to the virion. Its function is as follows. Capsid protein. Probably binds RNA and plays a role in packaging. The chain is Capsid protein from Cucumis sativus (Cucumber).